We begin with the raw amino-acid sequence, 267 residues long: Tryptophan synthase alpha chain (267 aa).

Active-site proton acceptor residues include Glu47 and Asp58.

It belongs to the TrpA family. In terms of assembly, tetramer of two alpha and two beta chains.

The catalysed reaction is (1S,2R)-1-C-(indol-3-yl)glycerol 3-phosphate + L-serine = D-glyceraldehyde 3-phosphate + L-tryptophan + H2O. It functions in the pathway amino-acid biosynthesis; L-tryptophan biosynthesis; L-tryptophan from chorismate: step 5/5. The alpha subunit is responsible for the aldol cleavage of indoleglycerol phosphate to indole and glyceraldehyde 3-phosphate. The protein is Tryptophan synthase alpha chain of Prosthecochloris aestuarii (strain DSM 271 / SK 413).